Consider the following 341-residue polypeptide: Probable membrane-associated kinase regulator 1 (341 aa).

5 disordered regions span residues 1 to 29 (MRRQ…FEFN), 67 to 122 (TLGS…SSRP), 158 to 185 (PKTN…KRMS), 206 to 230 (LSPK…NNIR), and 288 to 310 (RGGF…SVSS). 3 stretches are compositionally biased toward low complexity: residues 12–29 (PPQS…FEFN), 67–108 (TLGS…SFPL), and 167–180 (SSSS…APSS). A compositionally biased stretch (polar residues) spans 208 to 230 (PKQSSNIKTESSSSLKDSGNNIR). Low complexity predominate over residues 297–310 (SCSSSSSNNNSVSS).

In terms of assembly, a C-terminus-derived peptide binds BRI1 in vitro.

Its subcellular location is the cell membrane. In terms of biological role, may negatively regulate brassinosteroid signaling. The chain is Probable membrane-associated kinase regulator 1 (MAKR1) from Arabidopsis thaliana (Mouse-ear cress).